The following is a 608-amino-acid chain: Aspartate--tRNA(Asp/Asn) ligase (608 aa).

L-aspartate is bound at residue Glu187. Positions 211–214 (QQFK) are aspartate. Arg233 and His461 together coordinate L-aspartate. 233 to 235 (RDE) contributes to the ATP binding site. Residue Glu495 coordinates ATP. An L-aspartate-binding site is contributed by Arg502. An ATP-binding site is contributed by 547–550 (GLDR).

It belongs to the class-II aminoacyl-tRNA synthetase family. Type 1 subfamily. As to quaternary structure, homodimer.

It is found in the cytoplasm. It carries out the reaction tRNA(Asx) + L-aspartate + ATP = L-aspartyl-tRNA(Asx) + AMP + diphosphate. Functionally, aspartyl-tRNA synthetase with relaxed tRNA specificity since it is able to aspartylate not only its cognate tRNA(Asp) but also tRNA(Asn). Reaction proceeds in two steps: L-aspartate is first activated by ATP to form Asp-AMP and then transferred to the acceptor end of tRNA(Asp/Asn). The sequence is that of Aspartate--tRNA(Asp/Asn) ligase from Chlorobium phaeobacteroides (strain BS1).